Here is a 537-residue protein sequence, read N- to C-terminus: Chaperonin GroEL 3 (537 aa).

ATP contacts are provided by residues 30–33, 87–91, Gly414, 480–482, and Asp496; these read TLGP, DGTTT, and DAL.

The protein belongs to the chaperonin (HSP60) family. Forms a cylinder of 14 subunits composed of two heptameric rings stacked back-to-back. Interacts with the co-chaperonin GroES.

The protein resides in the cytoplasm. The enzyme catalyses ATP + H2O + a folded polypeptide = ADP + phosphate + an unfolded polypeptide.. In terms of biological role, together with its co-chaperonin GroES, plays an essential role in assisting protein folding. The GroEL-GroES system forms a nano-cage that allows encapsulation of the non-native substrate proteins and provides a physical environment optimized to promote and accelerate protein folding. This is Chaperonin GroEL 3 from Acaryochloris marina (strain MBIC 11017).